Reading from the N-terminus, the 245-residue chain is Fibroblast growth factor 13 (245 aa).

A disordered region spans residues 1–36 (MAAAIASSLIRQKRQAREREKSNACKCVSSPSKGKT). Residues 1–62 (MAAAIASSLI…GSKKRRRRRP (62 aa)) form a mediates targeting to the nucleus region. A mediates interaction with sodium channels region spans residues 67–201 (KGIVTKLYSR…AHFLPKPLKV (135 aa)). Positions 157 to 164 (SMIYRQQQ) are tubulin-binding domain necessary and sufficient for tubulin-binding. S208 carries the phosphoserine modification. The interval 213-245 (TEFSRSGSGTPTKSRSVSGVLNGGKSMSHNEST) is disordered. The span at 215–245 (FSRSGSGTPTKSRSVSGVLNGGKSMSHNEST) shows a compositional bias: polar residues.

The protein belongs to the heparin-binding growth factors family. Interacts with SCN8A; regulates SCN8A activity. Interacts with SCN1A; may regulate SCN1A activity. Interacts with SCN5A; the interaction is direct and may regulate SNC5A density at membranes and function. May also interact with SCN2A and SCN11A. Interacts with MAPK8IP2; may regulate the MAPK8IP2 scaffolding activity. May be phosphorylated. In terms of tissue distribution, detected in brain, eye and heart. In brain, the different isoforms display different patterns of expression. Expressed in brain and heart (at protein level). Isoform 3 is highly expressed in cardiac myocytes while isoform 1 is the most abundant in brain.

It localises to the cell projection. The protein resides in the filopodium. It is found in the growth cone. The protein localises to the dendrite. Its subcellular location is the cell membrane. It localises to the sarcolemma. The protein resides in the cytoplasm. It is found in the nucleus. Its function is as follows. Microtubule-binding protein which directly binds tubulin and is involved in both polymerization and stabilization of microtubules. Through its action on microtubules, may participate to the refinement of axons by negatively regulating axonal and leading processes branching. Plays a crucial role in neuron polarization and migration in the cerebral cortex and the hippocampus. Regulates voltage-gated sodium channel transport and function. May also play a role in MAPK signaling. Required for the development of axonal initial segment-targeting inhibitory GABAergic synapses made by chandelier neurons. Functionally, seems not to be involved in neuroblast polarization and migration but regulates axon branching. This chain is Fibroblast growth factor 13, found in Mus musculus (Mouse).